We begin with the raw amino-acid sequence, 1651 residues long: Alsin (1651 aa).

RCC1 repeat units follow at residues 59-108, 109-167, and 169-218; these read DGEV…AVTE, SGVV…ALSL, and REIW…ALVQ. Residues 425-462 are disordered; sequence ETAAQSGSASTGPESLKDLREEQVKQESLQGKKSSSLM. Residues 427–437 show a composition bias toward polar residues; sequence AAQSGSASTGP. Residues 439 to 449 are compositionally biased toward basic and acidic residues; sequence SLKDLREEQVK. Residues 450-461 show a composition bias toward polar residues; the sequence is QESLQGKKSSSL. Phosphoserine occurs at positions 459, 460, 477, and 486. Position 504 is a phosphothreonine (Thr504). RCC1 repeat units follow at residues 519-570 and 572-621; these read RTEV…ALTA and SQVY…FLVD. Position 527 is an N6-acetyllysine (Lys527). The 196-residue stretch at 684 to 879 folds into the DH domain; sequence GYIASLHELA…ESLALHLGKK (196 aa). The region spanning 895–1001 is the PH domain; the sequence is GKMTDSLRKP…RAISQAVDQA (107 aa). MORN repeat units lie at residues 1043–1065, 1066–1088, 1094–1116, 1117–1139, 1145–1167, 1169–1191, 1192–1214, and 1215–1238; these read YDGR…DGKM, YSGM…NKAL, YVGH…SGEV, FEGC…KLTS, FIGQ…TRGE, YMGM…FGLY, YEGN…DDTI, and YEGE…HGDY. Ser1329 carries the post-translational modification Phosphoserine. The 145-residue stretch at 1507-1651 folds into the VPS9 domain; the sequence is KQPDIALLGF…YFQIQREKLN (145 aa).

In terms of assembly, forms a heteromeric complex with ALS2CL. Interacts with ALS2CL.

Functionally, may act as a GTPase regulator. Controls survival and growth of spinal motoneurons. This Mus musculus (Mouse) protein is Alsin (Als2).